Consider the following 229-residue polypeptide: MAEEMESSLEASFSSSGAVSGASGFLPPARSRIFKIIVIGDSNVGKTCLTYRFCAGRFPDRTEATIGVDFRERAVEIDGERIKIQLWDTAGQERFRKSMVQHYYRNVHAVVFVYDMTNMASFHSLPSWIEECKQHLLANDIPRILVGNKCDLRSAIQVPTDLAQKFADTHSMPLFETSAKNPNDNDHVEAIFMTLAHKLKSHKPLMLSQPPDNGIILKPEPKPAMTCWC.

GTP-binding residues include Asn-43, Val-44, Gly-45, Lys-46, Thr-47, Cys-48, Thr-62, and Thr-65. Thr-47 serves as a coordination point for Mg(2+). The Switch 1 signature appears at 56-68 (GRFPDRTEATIGV). Positions 65 and 88 each coordinate Mg(2+). Positions 89 to 108 (TAGQERFRKSMVQHYYRNVH) match the Switch 2 motif. GTP is bound by residues Gly-91, Asn-148, Lys-149, Asp-151, Ala-179, and Lys-180. S-geranylgeranyl cysteine attachment occurs at residues Cys-227 and Cys-229. Cysteine methyl ester is present on Cys-229.

The protein belongs to the small GTPase superfamily. Rab family. Interacts (GTP- and GDP-bound forms) with ATG16L1; the complex consists of a tetramer where two RAB33B molecules bind independently one molecule of the ATG16L1 homodimer; the interaction promotes ATG12-ATG5-ATG16L1 complex recruitment to phagophores. Interacts with ATG16L2; however interaction is approximately hundred times lower than for ATG16L1. Interacts with RIC1 (via C-terminus domain); the interaction is direct with a preference for RAB33B-GTP. Interacts with RGP1. Mg(2+) is required as a cofactor. Prenylated.

It localises to the golgi apparatus membrane. Its subcellular location is the golgi apparatus. The protein resides in the cis-Golgi network. The protein localises to the preautophagosomal structure membrane. The catalysed reaction is GTP + H2O = GDP + phosphate + H(+). Regulated by guanine nucleotide exchange factors (GEFs) which promote the exchange of bound GDP for free GTP. Regulated by GTPase activating proteins (GAPs) such as SGSM2 which increase the GTP hydrolysis activity. Inhibited by GDP dissociation inhibitors (GDIs). In terms of biological role, the small GTPases Rab are key regulators of intracellular membrane trafficking, from the formation of transport vesicles to their fusion with membranes. Rabs cycle between an inactive GDP-bound form and an active GTP-bound form that is able to recruit to membranes different sets of downstream effectors directly responsible for vesicle formation, movement, tethering and fusion. RAB33B acts, in coordination with RAB6A, to regulate intra-Golgi retrograde trafficking. Participates in autophagosome formation by recruiting the ATG12-ATG5-ATG16L1 complex to phagophores, probably in a nucleotide-independent manner. The sequence is that of Ras-related protein Rab-33B from Homo sapiens (Human).